The primary structure comprises 175 residues: Receptor activity-modifying protein 2 (175 aa).

The first 42 residues, 1-42, serve as a signal peptide directing secretion; sequence MASLRVERAGGPRLPRTRVGRPAALRLLLLLGAVLNPHEALA. Topologically, residues 43–143 are extracellular; the sequence is QPLPTTGTPG…VQPTFSDPPE (101 aa). Cystine bridges form between cysteine 68–cysteine 99 and cysteine 84–cysteine 131. An N-linked (GlcNAc...) asparagine glycan is attached at asparagine 130. Residues 144–165 traverse the membrane as a helical segment; it reads DVLLAMIIAPICLIPFLITLVV. Residues 166 to 175 lie on the Cytoplasmic side of the membrane; that stretch reads WRSKDSEAQA.

The protein belongs to the RAMP family. In terms of assembly, heterodimer of CALCRL and RAMP2; the interaction forms the receptor complex for adrenomedullin/ADM. Heterodimer of CALCR and RAMP2; interaction forms the AMYR2 receptor complex for calcitonin/CALC and amylin/IAPP. Strongly expressed in lung, breast, immune system and fetal tissues.

The protein resides in the cell membrane. In terms of biological role, accessory protein that interacts with and modulates the function of G-protein coupled receptors including calcitonin gene-related peptide type 1 receptor (CALCRL) and calcitonin receptor (CALCR). Required for the transport of CALCRL to the plasma membrane. Together with CALCRL, form a receptor complex for adrenomedullin/ADM. Together with CALCR, act as a receptor complex for calcitonin/CT/CALC. Together with CALCR, also act as a receptor complex for amylin/IAPP. This Homo sapiens (Human) protein is Receptor activity-modifying protein 2.